A 186-amino-acid chain; its full sequence is Tumor necrosis factor, alpha-induced protein 8-like protein 2 A (186 aa).

Belongs to the TNFAIP8 family. TNFAIP8L2 subfamily.

Its function is as follows. Acts as a negative regulator of innate and adaptive immunity by maintaining immune homeostasis. Negative regulator of Toll-like receptor and T-cell receptor function. Prevents hyperresponsiveness of the immune system and maintains immune homeostasis. Inhibits jun/ap1 and NF-kappa-B activation. Promotes Fas-induced apoptosis. The sequence is that of Tumor necrosis factor, alpha-induced protein 8-like protein 2 A (tnfaip8l2a) from Danio rerio (Zebrafish).